The primary structure comprises 522 residues: Cytochrome P450 1A3 (522 aa).

Residue Phe229 participates in substrate binding. Cys463 serves as a coordination point for heme.

This sequence belongs to the cytochrome P450 family. Heme is required as a cofactor. In terms of tissue distribution, liver.

The protein localises to the endoplasmic reticulum membrane. The protein resides in the microsome membrane. The enzyme catalyses an organic molecule + reduced [NADPH--hemoprotein reductase] + O2 = an alcohol + oxidized [NADPH--hemoprotein reductase] + H2O + H(+). Its function is as follows. Cytochromes P450 are a group of heme-thiolate monooxygenases. They oxidize a variety of structurally unrelated compounds, including steroids, fatty acids, and xenobiotics. In Oncorhynchus mykiss (Rainbow trout), this protein is Cytochrome P450 1A3 (cyp1a3).